The sequence spans 485 residues: ATP synthase subunit beta (485 aa).

Basic and acidic residues predominate over residues 1–11 (MPATETADKNT). The tract at residues 1-20 (MPATETADKNTKSANSDTSG) is disordered. 170-177 (GGAGVGKT) is a binding site for ATP.

This sequence belongs to the ATPase alpha/beta chains family. F-type ATPases have 2 components, CF(1) - the catalytic core - and CF(0) - the membrane proton channel. CF(1) has five subunits: alpha(3), beta(3), gamma(1), delta(1), epsilon(1). CF(0) has three main subunits: a(1), b(2) and c(9-12). The alpha and beta chains form an alternating ring which encloses part of the gamma chain. CF(1) is attached to CF(0) by a central stalk formed by the gamma and epsilon chains, while a peripheral stalk is formed by the delta and b chains.

The protein resides in the cell membrane. The enzyme catalyses ATP + H2O + 4 H(+)(in) = ADP + phosphate + 5 H(+)(out). Functionally, produces ATP from ADP in the presence of a proton gradient across the membrane. The catalytic sites are hosted primarily by the beta subunits. The sequence is that of ATP synthase subunit beta from Mycolicibacterium paratuberculosis (strain ATCC BAA-968 / K-10) (Mycobacterium paratuberculosis).